Here is a 1404-residue protein sequence, read N- to C-terminus: MRSHNDFESITIRLASPERIKEWSYGEVKKPETINYRTLKPEKDGLFCEKIFGTTKDWECYCGKFKSIRYKGVVCDKCGVEVTHSKVRRERMGHIELAAPVSHIWYYRSVPSRMGLLLDMTVNQLKSVLYFEKYVIIDPADSGRNRGELIDEEEYHGYLDEYGDKFVAGIGADAIKELLARIDVDAEARMIRQKIQDKDKISDKRILKRLEVLEAFRDSGNRPEWMVLDIVPVIPPELRPMVQLEGGRFATSDLNDLYRRVINRNNRLKRLLALKAPEIIVRNEKRMLQEAVDALFDNSRRKRAVKGKGNRPLKSISDMLKGKQGRFRQNLLGKRVDYSGRSVIVVGPELKYHEMGLPKKMALELFKPFIMKRLVDLDLAPNIKSAKKKVEAEDKEVFDVLEYVVKEHPVMLNRAPTLHRLGIQAFLPVLVEGKAIKLHPLVCHAFNADFDGDQMAIHVPLTPKAQLETWMLMLSPHNILNPANGHPICGPTQDIVLGIYYLTSELPSEPGVPLKSFSNLEEVHYAIDRGVVEFRTKISVYHQGKILETTPGRLIFNTILPEGYAYVNRPLSDKETNRIIADVYDKYGPAKTVLMLDDIKKLGYRYATLFAPTISIEDIRVSPGKVGLVGDANKEVEKADSEYRKGIITNEERRKKVIEIWTKTNDLITESMFKELEKDKGGFNPVFIMAASGARGSKQQIRQLAGMRGLMAKPSGEIIELAIRSNFREGLSVLEFFISTHGARKGLADTALKTADAGYLTRRLVDISQDVIISEDDCGTEESISLGVVKEGENVIVSLNDRVFGRYTAEDVIDPVTDQVVYPRNTLITREVGQKVENLGYDKIRVRSPLTCESKQGVCIRCYGMDMARLIPAEIGEAVGTIAAQSIGQPGTQLTMRTFHIGGAASAKVQEKEHKVSYTGIVNNINGRLITNEKSQSVFSRRGSIVIQRLIQQYKTEELSNLRVENGQKVDKGELVATSPAGENITSEMPGTIHIENGLFRILGEEAVIPVKTGTIVNVKVNDITQPNQPLAEFDPYNEVGISEIDGTVQWMDLEIGKNVRRDEDLRTSNILLKVIEQRREKLNPRIAVISGGSREEYSVPVDAIISVQDGDKVKAGDILFKIPTVAEKTRDITGGLPRVDELFEARRPKDATTLAETDGKIEISGEIVKEKRVLYIHPDNPDLEKVKVTIPIGKQIRVRNGDFVKRGDQIDDGNLDPHDILRVKGVTALQVYLVQEVQEVYRLQGVHINDKHIEVVVRQMLRKVLITDSGDTSFVNQQQIDRLVFNEENKRVIAEGGSPAESVPILLGLTKASLNTESFFSAASFQETTKVLTDAAIKGKTDNLMGLKENVIIGHMIPAGTGTKKYKDIAVFKSAYGDLDRPLEEEEEEEIPQAIAEESDAEE.

Zn(2+) contacts are provided by Cys60, Cys62, Cys75, and Cys78. Residues Asp449, Asp451, and Asp453 each coordinate Mg(2+). Cys778, Cys852, Cys859, and Cys862 together coordinate Zn(2+). Residues 1380-1404 (LDRPLEEEEEEEIPQAIAEESDAEE) form a disordered region. Residues 1384 to 1404 (LEEEEEEEIPQAIAEESDAEE) are compositionally biased toward acidic residues.

The protein belongs to the RNA polymerase beta' chain family. In terms of assembly, the RNAP catalytic core consists of 2 alpha, 1 beta, 1 beta' and 1 omega subunit. When a sigma factor is associated with the core the holoenzyme is formed, which can initiate transcription. Mg(2+) is required as a cofactor. It depends on Zn(2+) as a cofactor.

The catalysed reaction is RNA(n) + a ribonucleoside 5'-triphosphate = RNA(n+1) + diphosphate. Functionally, DNA-dependent RNA polymerase catalyzes the transcription of DNA into RNA using the four ribonucleoside triphosphates as substrates. The protein is DNA-directed RNA polymerase subunit beta' of Leptospira interrogans serogroup Icterohaemorrhagiae serovar Lai (strain 56601).